The sequence spans 154 residues: Superoxide dismutase [Cu-Zn] (154 aa).

3 residues coordinate Cu cation: His47, His49, and His64. A disulfide bridge connects residues Cys58 and Cys147. Positions 64, 72, 81, and 84 each coordinate Zn(2+). His121 is a Cu cation binding site. The segment covering 126–137 has biased composition (basic and acidic residues); it reads DLGRGGNEESKK. The interval 126 to 147 is disordered; that stretch reads DLGRGGNEESKKTGNAGPRPAC.

The protein belongs to the Cu-Zn superoxide dismutase family. Homodimer. Requires Cu cation as cofactor. It depends on Zn(2+) as a cofactor.

Its subcellular location is the cytoplasm. It carries out the reaction 2 superoxide + 2 H(+) = H2O2 + O2. Its function is as follows. Destroys radicals which are normally produced within the cells and which are toxic to biological systems. Plays an important role in the phase transition, and may be important in vivo, as it would facilitate the intracellular survival of the fungus by providing a non-toxic environment in the macrophage phagolysosomes. This Talaromyces marneffei (Penicillium marneffei) protein is Superoxide dismutase [Cu-Zn].